Reading from the N-terminus, the 295-residue chain is HTH-type transcriptional regulator TdfR (295 aa).

The HTH lysR-type domain maps to 1–58 (MEFRQLRYFVAAAEEGNVGAAARRLHISQPPVTRQIHALEQHLGVLLFERSARGVQLT). Positions 18–37 (VGAAARRLHISQPPVTRQIH) form a DNA-binding region, H-T-H motif.

This sequence belongs to the LysR transcriptional regulatory family.

The protein localises to the cytoplasm. Involved in the regulation of 3-chlorocatechol degradation. Transcriptional regulator of tfdB expression. Acts as a repressor in the absence of its effector (either 2-cis-chlorodiene lactone or chloromaleylacetate) but acts as an activator when its effector is present. The protein is HTH-type transcriptional regulator TdfR (tfdR) of Cupriavidus pinatubonensis (strain JMP 134 / LMG 1197) (Cupriavidus necator (strain JMP 134)).